Here is a 138-residue protein sequence, read N- to C-terminus: Protein A2-A3 (138 aa).

This sequence belongs to the T5likevirus A2 protein family. In terms of assembly, interacts with A1 protein; the two proteins form heterooligomers.

Functionally, involved, together with A1 protein, in the second step transfer (SST) which allows the completion of viral DNA into the host cell. In Escherichia coli (Enterobacteria phage BF23), this protein is Protein A2-A3 (A2-A3).